Reading from the N-terminus, the 429-residue chain is Gamma-glutamyl phosphate reductase (429 aa).

It belongs to the gamma-glutamyl phosphate reductase family.

Its subcellular location is the cytoplasm. The enzyme catalyses L-glutamate 5-semialdehyde + phosphate + NADP(+) = L-glutamyl 5-phosphate + NADPH + H(+). Its pathway is amino-acid biosynthesis; L-proline biosynthesis; L-glutamate 5-semialdehyde from L-glutamate: step 2/2. Its function is as follows. Catalyzes the NADPH-dependent reduction of L-glutamate 5-phosphate into L-glutamate 5-semialdehyde and phosphate. The product spontaneously undergoes cyclization to form 1-pyrroline-5-carboxylate. This is Gamma-glutamyl phosphate reductase from Nocardioides sp. (strain ATCC BAA-499 / JS614).